We begin with the raw amino-acid sequence, 373 residues long: Chorismate synthase (373 aa).

Residues Arg48 and Arg54 each contribute to the NADP(+) site. FMN is bound by residues 131–133 (RSS), 243–244 (NA), Gly288, 303–307 (KPTSS), and Arg329.

It belongs to the chorismate synthase family. In terms of assembly, homotetramer. Requires FMNH2 as cofactor.

The enzyme catalyses 5-O-(1-carboxyvinyl)-3-phosphoshikimate = chorismate + phosphate. Its pathway is metabolic intermediate biosynthesis; chorismate biosynthesis; chorismate from D-erythrose 4-phosphate and phosphoenolpyruvate: step 7/7. In terms of biological role, catalyzes the anti-1,4-elimination of the C-3 phosphate and the C-6 proR hydrogen from 5-enolpyruvylshikimate-3-phosphate (EPSP) to yield chorismate, which is the branch point compound that serves as the starting substrate for the three terminal pathways of aromatic amino acid biosynthesis. This reaction introduces a second double bond into the aromatic ring system. The protein is Chorismate synthase of Beijerinckia indica subsp. indica (strain ATCC 9039 / DSM 1715 / NCIMB 8712).